Here is a 294-residue protein sequence, read N- to C-terminus: Cytidine deaminase (294 aa).

CMP/dCMP-type deaminase domains lie at 48–168 (DEDA…FGPK) and 186–294 (LTGD…VLLG). 89–91 (NME) contributes to the substrate binding site. Residue His-102 coordinates Zn(2+). Residue Glu-104 is the Proton donor of the active site. The Zn(2+) site is built by Cys-129 and Cys-132.

The protein belongs to the cytidine and deoxycytidylate deaminase family. In terms of assembly, homodimer. The cofactor is Zn(2+).

The catalysed reaction is cytidine + H2O + H(+) = uridine + NH4(+). It catalyses the reaction 2'-deoxycytidine + H2O + H(+) = 2'-deoxyuridine + NH4(+). Its function is as follows. This enzyme scavenges exogenous and endogenous cytidine and 2'-deoxycytidine for UMP synthesis. In Salmonella schwarzengrund (strain CVM19633), this protein is Cytidine deaminase.